A 155-amino-acid chain; its full sequence is Small ribosomal subunit protein uS7 (155 aa).

This sequence belongs to the universal ribosomal protein uS7 family. In terms of assembly, part of the 30S ribosomal subunit. Contacts proteins S9 and S11.

Functionally, one of the primary rRNA binding proteins, it binds directly to 16S rRNA where it nucleates assembly of the head domain of the 30S subunit. Is located at the subunit interface close to the decoding center, probably blocks exit of the E-site tRNA. This chain is Small ribosomal subunit protein uS7, found in Chloroherpeton thalassium (strain ATCC 35110 / GB-78).